We begin with the raw amino-acid sequence, 829 residues long: Leucine--tRNA ligase (829 aa).

The short motif at 42–52 (PYPSGNLHMGH) is the 'HIGH' region element. A 'KMSKS' region motif is present at residues 582–586 (KMSKS). An ATP-binding site is contributed by K585.

The protein belongs to the class-I aminoacyl-tRNA synthetase family.

It is found in the cytoplasm. It carries out the reaction tRNA(Leu) + L-leucine + ATP = L-leucyl-tRNA(Leu) + AMP + diphosphate. The sequence is that of Leucine--tRNA ligase from Moorella thermoacetica (strain ATCC 39073 / JCM 9320).